We begin with the raw amino-acid sequence, 364 residues long: Glycosyltransferase 8 domain-containing protein 1 (364 aa).

Residues 1 to 5 (MRRVH) lie on the Cytoplasmic side of the membrane. Residues 6 to 26 (ITVILLAAVIFLLVLHHNILG) form a helical; Signal-anchor for type II membrane protein membrane-spanning segment. The Lumenal portion of the chain corresponds to 27–364 (LSDILKRQNS…QFSLIRRHAE (338 aa)). 3 N-linked (GlcNAc...) asparagine glycosylation sites follow: N102, N247, and N255.

Belongs to the glycosyltransferase 8 family.

It localises to the membrane. The sequence is that of Glycosyltransferase 8 domain-containing protein 1 (glt8d1) from Xenopus laevis (African clawed frog).